The chain runs to 354 residues: MTLLKNDTFLRALLKQPVEYTPIWMMRQAGRYLPEYKATRTKAGSFLDLCKNTGLATEVTIQPLERFDLDAAILFSDILTVPDAMGLGLYFAEGEGPKFKRALQHESDIAKLHVPDMEKLQYVFDAVTSIRKALDGRVPLIGFSGSPFTLACYMVEGGGSKEFRTIKTMMYSRPDLLYKILDTNAQAVTAYLNAQIDAGAQAVQIFDTWGGVLSDAAFKEFSLKYIRQIVAGLKRESEGRRVPVIVFAKGGGLWLESMAQIGADALGLDWTCNIGEARRRVGNQVALQGNFDPSALFGTPESIRTEVARILTGYGHGSGHVFNLGHGINQHADPEHAKILVDTVHELSRQYHGG.

Substrate-binding positions include 27-31 (RQAGR), Asp77, Tyr153, Thr208, and His326.

It belongs to the uroporphyrinogen decarboxylase family. Homodimer.

The protein localises to the cytoplasm. The catalysed reaction is uroporphyrinogen III + 4 H(+) = coproporphyrinogen III + 4 CO2. Its pathway is porphyrin-containing compound metabolism; protoporphyrin-IX biosynthesis; coproporphyrinogen-III from 5-aminolevulinate: step 4/4. Its function is as follows. Catalyzes the decarboxylation of four acetate groups of uroporphyrinogen-III to yield coproporphyrinogen-III. This is Uroporphyrinogen decarboxylase from Neisseria gonorrhoeae (strain ATCC 700825 / FA 1090).